A 236-amino-acid polypeptide reads, in one-letter code: MKLNISYPANGTQKCIDIEDEHKLRVFYEKRMGQEVEGDTVGDEFKGYIFRITGGNDKQGFPMKQGVMHPTRVKLLLAKGHSCYRPRRTGERKRKSVRGCIVAQDLAVLALSVVKQGDSDIEGLTDTTTPKRLGPKRANNIRKFFGLTKEDDVRQFVVRREVVKGDKKYTKAPKIQRLVTPQTLQRKRALKAQKVKNAQQQRDAAAEYAQLLAQRLHERKAERAEIKKRRASSLKA.

Phosphoserine is present on residues Ser-232 and Ser-233.

Belongs to the eukaryotic ribosomal protein eS6 family. Post-translationally, phosphorylated.

The sequence is that of Small ribosomal subunit protein eS6 (RPS6) from Debaryomyces hansenii (strain ATCC 36239 / CBS 767 / BCRC 21394 / JCM 1990 / NBRC 0083 / IGC 2968) (Yeast).